A 156-amino-acid polypeptide reads, in one-letter code: Small ribosomal subunit protein uS7 (156 aa).

It belongs to the universal ribosomal protein uS7 family. As to quaternary structure, part of the 30S ribosomal subunit. Contacts proteins S9 and S11.

Functionally, one of the primary rRNA binding proteins, it binds directly to 16S rRNA where it nucleates assembly of the head domain of the 30S subunit. Is located at the subunit interface close to the decoding center, probably blocks exit of the E-site tRNA. In Clostridium botulinum (strain Kyoto / Type A2), this protein is Small ribosomal subunit protein uS7.